The primary structure comprises 189 residues: Putative ankyrin repeat protein TV1425 (189 aa).

ANK repeat units lie at residues 31–60 (YNRT…KLED), 64–93 (EGST…NVNT), 97–126 (SGKT…NVND), and 130–159 (EGET…DISA).

The sequence is that of Putative ankyrin repeat protein TV1425 from Thermoplasma volcanium (strain ATCC 51530 / DSM 4299 / JCM 9571 / NBRC 15438 / GSS1).